The primary structure comprises 89 residues: Large ribosomal subunit protein bL31B (89 aa).

The protein belongs to the bacterial ribosomal protein bL31 family. Type B subfamily. As to quaternary structure, part of the 50S ribosomal subunit.

This is Large ribosomal subunit protein bL31B from Aeromonas salmonicida (strain A449).